The sequence spans 180 residues: ADP-ribosylation factor-like protein 1 (180 aa).

Residue Gly2 is the site of N-myristoyl glycine attachment. Residues 23 to 30 (GLDGAGKT), 66 to 70 (DLGGQ), and 125 to 128 (NKQD) each bind GTP.

This sequence belongs to the small GTPase superfamily. Arf family.

In terms of biological role, GTP-binding protein involved in protein trafficking; may modulate vesicle budding and uncoating within the Golgi apparatus. This chain is ADP-ribosylation factor-like protein 1 (Arl1), found in Drosophila melanogaster (Fruit fly).